Consider the following 417-residue polypeptide: Gamma-glutamyl phosphate reductase (417 aa).

This sequence belongs to the gamma-glutamyl phosphate reductase family.

The protein localises to the cytoplasm. The catalysed reaction is L-glutamate 5-semialdehyde + phosphate + NADP(+) = L-glutamyl 5-phosphate + NADPH + H(+). It functions in the pathway amino-acid biosynthesis; L-proline biosynthesis; L-glutamate 5-semialdehyde from L-glutamate: step 2/2. Catalyzes the NADPH-dependent reduction of L-glutamate 5-phosphate into L-glutamate 5-semialdehyde and phosphate. The product spontaneously undergoes cyclization to form 1-pyrroline-5-carboxylate. The protein is Gamma-glutamyl phosphate reductase of Idiomarina loihiensis (strain ATCC BAA-735 / DSM 15497 / L2-TR).